The sequence spans 211 residues: uncharacterized protein (211 aa).

This is an uncharacterized protein from Archaeoglobus fulgidus (strain ATCC 49558 / DSM 4304 / JCM 9628 / NBRC 100126 / VC-16).